A 148-amino-acid chain; its full sequence is Large ribosomal subunit protein bL9 (148 aa).

The protein belongs to the bacterial ribosomal protein bL9 family.

Its function is as follows. Binds to the 23S rRNA. The chain is Large ribosomal subunit protein bL9 from Pseudomonas putida (strain GB-1).